We begin with the raw amino-acid sequence, 211 residues long: High mobility group protein B1-like 1 (211 aa).

Residues lysine 3, lysine 7, lysine 8, lysine 12, lysine 28, lysine 29, and lysine 30 each carry the N6-acetyllysine modification. The HMG box 1 DNA-binding region spans proline 9–isoleucine 79. A disordered region spans residues tyrosine 71 to lysine 96. The segment covering glycine 83–alanine 94 has biased composition (basic and acidic residues). The segment at residues proline 95–glutamine 163 is a DNA-binding region (HMG box 2). N6-acetyllysine is present on residues lysine 127, lysine 128, lysine 172, lysine 173, lysine 177, lysine 180, lysine 182, lysine 183, lysine 184, and lysine 185. The interval alanine 161–glutamate 211 is disordered. Basic and acidic residues predominate over residues glycine 166–glutamate 179. Residues glutamate 187–glutamate 211 show a composition bias toward acidic residues.

The protein belongs to the HMGB family.

It localises to the nucleus. It is found in the chromosome. Functionally, binds preferentially single-stranded DNA and unwinds double-stranded DNA. This chain is High mobility group protein B1-like 1 (HMGB1P1), found in Homo sapiens (Human).